The primary structure comprises 789 residues: Leucine-rich repeat and fibronectin type-III domain-containing protein 2 (789 aa).

The N-terminal stretch at 1 to 20 (METLLGGLLAFGMAFAVVDA) is a signal peptide. The LRRNT domain occupies 21 to 52 (CPKYCVCQNLSESLGTLCPSKGLLFVPPDIDR). At 21–534 (CPKYCVCQNL…MHSQILGGTM (514 aa)) the chain is on the extracellular side. N29 carries N-linked (GlcNAc...) asparagine glycosylation. 7 LRR repeats span residues 53 to 74 (RTVE…DFAN), 77 to 98 (GLVD…SFLD), 101 to 122 (SLRS…TLRG), 125 to 146 (NLQH…AFED), 150 to 171 (TLED…SVRR), 174 to 195 (NLHQ…TFAD), and 198 to 219 (KLAR…PIFA). Residues 242–288 (NPLHCNCELLWLRRLERDDDLETCGSPGGLKGRYFWHVREEEFVCEP) enclose the LRRCT domain. An Ig-like domain is found at 289–375 (PLITQHTHKL…GEATAMVEVS (87 aa)). C310 and C359 are joined by a disulfide. N332, N341, and N384 each carry an N-linked (GlcNAc...) asparagine glycan. The tract at residues 383–424 (SNSTSRTAPPKSRLSDITGSSKTSRGGGGSGGGEPPKSPPER) is disordered. Over residues 407-416 (RGGGGSGGGE) the composition is skewed to gly residues. A Fibronectin type-III domain is found at 421 to 518 (PPERAVLVSE…GCAQFFTKAD (98 aa)). Residues 535–555 (ILVIGGIIVATLLVFIVILMV) form a helical membrane-spanning segment. Over 556-789 (RYKVCNHEAP…SSEWVMESTV (234 aa)) the chain is Cytoplasmic. Disordered regions lie at residues 577–602 (SQTN…PPKV), 619–654 (SDSS…PSLD), and 668–702 (QRKE…LGPP). The span at 583 to 599 (QPPPPSSAPAGAPPQGP) shows a compositional bias: pro residues. Over residues 619–638 (SDSSSSSSLGSGEAAGLGRA) the composition is skewed to low complexity. The segment covering 641–650 (RIPPSAPRPK) has biased composition (pro residues). Residues 786–789 (ESTV) carry the PDZ-binding motif.

Belongs to the LRFN family. Forms heteromeric complexes with LRFN1, LRFN3, LRFN4 and LRFN5. Can form homomeric complexes, but not across cell junctions. Directly interacts with 2 NMDA receptor subunits GRIN1 and GRIN2A. Interacts with DLG1, DLG2, DLG3 and DLG4. Post-translationally, glycosylated.

The protein resides in the membrane. The protein localises to the synapse. It is found in the postsynaptic cell membrane. Its function is as follows. Promotes neurite outgrowth in hippocampal neurons. Enhances the cell surface expression of 2 NMDA receptor subunits GRIN1 and GRIN2A. May play a role in redistributing DLG4 to the cell periphery. The sequence is that of Leucine-rich repeat and fibronectin type-III domain-containing protein 2 (LRFN2) from Homo sapiens (Human).